The primary structure comprises 295 residues: Trimeric intracellular cation channel type A (295 aa).

Residues 1 to 18 (MELLSALSLDDLAASFSK) lie on the Lumenal side of the membrane. A helical transmembrane segment spans residues 19–39 (LPVFPLFDVAYYIISILYLKY). Topologically, residues 40–51 (EPGAVDLSKRSP) are cytoplasmic. The helical transmembrane segment at 52-72 (VASWLCAMLYCFGSYILADVL) threads the bilayer. At 73–84 (LGESPIHYFSNN) the chain is on the lumenal side. Gly-74 lines the Ca(2+) pocket. A helical transmembrane segment spans residues 85–105 (ANILLASAVWYLTFFCPLNIF). Over 106-144 (YKIVSFLPVKLVLVGMKEVVRVRKIAMGIHHAHHHYHHG) the chain is Cytoplasmic. 2 residues coordinate a 1,2-diacyl-sn-glycero-3-phospho-(1D-myo-inositol-4,5-bisphosphate): Lys-122 and Arg-126. Residues 145–165 (WVIMVLIGWVKGSGVALMSNL) form a helical membrane-spanning segment. Over 166–178 (EQLLRGVWKPETN) the chain is Lumenal. Residues 179 to 199 (EILHMSFPTKASLYGAILFTL) form a helical membrane-spanning segment. The Cytoplasmic segment spans residues 200-201 (QQ). A helical transmembrane segment spans residues 202–222 (AHWLPISKAYLIFFFTLFMAV). The Lumenal portion of the chain corresponds to 223–233 (CKIYMTATHSH). The chain crosses the membrane as a helical span at residues 234–254 (GSPFAIFESGICYVLFAAANG). The Cytoplasmic segment spans residues 255-295 (DHDDHGNHHHHHDDHDVSHSAGKSKEEHNEGTRKRKTKKAE). The disordered stretch occupies residues 258-295 (DHGNHHHHHDDHDVSHSAGKSKEEHNEGTRKRKTKKAE). Over residues 267-286 (DDHDVSHSAGKSKEEHNEGT) the composition is skewed to basic and acidic residues.

This sequence belongs to the TMEM38 family. Homotrimer; conformation seems to be controled by binding to diacylglycerol (DAG).

It is found in the sarcoplasmic reticulum membrane. The protein resides in the nucleus membrane. It carries out the reaction K(+)(in) = K(+)(out). Its activity is regulated as follows. Channel activity is activated by a change of voltage within the sarcoplasmic reticulum lumen and blocked by luminal high Ca(2+) levels. Intracellular monovalent cation channel required for maintenance of rapid intracellular calcium release. Acts as a potassium counter-ion channel that functions in synchronization with calcium release from intracellular stores. Opened by a change of voltage within the sarcoplasmic reticulum lumen. The chain is Trimeric intracellular cation channel type A (tmem38a) from Xenopus laevis (African clawed frog).